Here is a 389-residue protein sequence, read N- to C-terminus: Phosphopentomutase (389 aa).

Mn(2+) contacts are provided by Asp-9, Asp-282, His-287, Asp-323, His-324, and His-335.

It belongs to the phosphopentomutase family. It depends on Mn(2+) as a cofactor.

The protein resides in the cytoplasm. The enzyme catalyses 2-deoxy-alpha-D-ribose 1-phosphate = 2-deoxy-D-ribose 5-phosphate. It catalyses the reaction alpha-D-ribose 1-phosphate = D-ribose 5-phosphate. It functions in the pathway carbohydrate degradation; 2-deoxy-D-ribose 1-phosphate degradation; D-glyceraldehyde 3-phosphate and acetaldehyde from 2-deoxy-alpha-D-ribose 1-phosphate: step 1/2. In terms of biological role, isomerase that catalyzes the conversion of deoxy-ribose 1-phosphate (dRib-1-P) and ribose 1-phosphate (Rib-1-P) to deoxy-ribose 5-phosphate (dRib-5-P) and ribose 5-phosphate (Rib-5-P), respectively. In Kosmotoga olearia (strain ATCC BAA-1733 / DSM 21960 / TBF 19.5.1), this protein is Phosphopentomutase.